A 190-amino-acid chain; its full sequence is Elongation factor P (190 aa).

Belongs to the elongation factor P family.

It is found in the cytoplasm. It functions in the pathway protein biosynthesis; polypeptide chain elongation. In terms of biological role, involved in peptide bond synthesis. Stimulates efficient translation and peptide-bond synthesis on native or reconstituted 70S ribosomes in vitro. Probably functions indirectly by altering the affinity of the ribosome for aminoacyl-tRNA, thus increasing their reactivity as acceptors for peptidyl transferase. The chain is Elongation factor P from Sulfurihydrogenibium sp. (strain YO3AOP1).